The sequence spans 406 residues: Calreticulin (406 aa).

The N-terminal stretch at 1–17 (MMWCKTVIVLLATVGFI) is a signal peptide. The cysteines at positions 105 and 137 are disulfide-linked. An alpha-D-glucoside contacts are provided by Tyr109, Lys111, Tyr128, and Asp135. A run of 7 repeats spans residues 191 to 202 (VESGNLEDDWDF), 210 to 221 (DPTATKPEDWDD), 227 to 238 (DPDDKKPEDWDK), 244 to 255 (DPDATKPEDWDD), 259 to 269 (GEWEPPMIDNP), 273 to 283 (GEWQPKQLDNP), and 287 to 297 (GAWEHPEIANP). The segment at 191–255 (VESGNLEDDW…DATKPEDWDD (65 aa)) is 4 X approximate repeats. A compositionally biased stretch (basic and acidic residues) spans 207 to 251 (KIKDPTATKPEDWDDRATIPDPDDKKPEDWDKPEHIPDPDATKPE). The disordered stretch occupies residues 207 to 259 (KIKDPTATKPEDWDDRATIPDPDDKKPEDWDKPEHIPDPDATKPEDWDDEMDG). Residues 259-297 (GEWEPPMIDNPEFKGEWQPKQLDNPNYKGAWEHPEIANP) form a 3 X approximate repeats region. Asp317 serves as a coordination point for an alpha-D-glucoside. The disordered stretch occupies residues 347–406 (KNTQAGEKKMKEAQDEVQRKKDEEEAKKASDKDDEDEDDDDEEKDDESKQDKDQSEHDEL). Over residues 352–377 (GEKKMKEAQDEVQRKKDEEEAKKASD) the composition is skewed to basic and acidic residues. The span at 378-391 (KDDEDEDDDDEEKD) shows a compositional bias: acidic residues. A compositionally biased stretch (basic and acidic residues) spans 392–406 (DESKQDKDQSEHDEL).

Belongs to the calreticulin family.

Its subcellular location is the endoplasmic reticulum lumen. Its function is as follows. Molecular calcium-binding chaperone promoting folding, oligomeric assembly and quality control in the ER via the calreticulin/calnexin cycle. This lectin may interact transiently with almost all of the monoglucosylated glycoproteins that are synthesized in the ER. The chain is Calreticulin from Drosophila melanogaster (Fruit fly).